A 148-amino-acid polypeptide reads, in one-letter code: UPF0260 protein Spro_2751 (148 aa).

This sequence belongs to the UPF0260 family.

This Serratia proteamaculans (strain 568) protein is UPF0260 protein Spro_2751.